A 530-amino-acid polypeptide reads, in one-letter code: ATP synthase subunit alpha 3 (530 aa).

174–181 (GDRATGKT) is a binding site for ATP. The segment covering 507-522 (TASATAPPDPPAASAA) has biased composition (low complexity). Residues 507–530 (TASATAPPDPPAASAAELPQPDSP) form a disordered region.

It belongs to the ATPase alpha/beta chains family. In terms of assembly, F-type ATPases have 2 components, CF(1) - the catalytic core - and CF(0) - the membrane proton channel. CF(1) has five subunits: alpha(3), beta(3), gamma(1), delta(1), epsilon(1). CF(0) has three main subunits: a(1), b(2) and c(9-12). The alpha and beta chains form an alternating ring which encloses part of the gamma chain. CF(1) is attached to CF(0) by a central stalk formed by the gamma and epsilon chains, while a peripheral stalk is formed by the delta and b chains.

It localises to the cell inner membrane. The catalysed reaction is ATP + H2O + 4 H(+)(in) = ADP + phosphate + 5 H(+)(out). Functionally, produces ATP from ADP in the presence of a proton gradient across the membrane. The alpha chain is a regulatory subunit. This chain is ATP synthase subunit alpha 3, found in Paraburkholderia xenovorans (strain LB400).